The chain runs to 251 residues: Ubiquinone/menaquinone biosynthesis C-methyltransferase UbiE (251 aa).

S-adenosyl-L-methionine is bound by residues T74, D95, 123-124 (NA), and S140.

This sequence belongs to the class I-like SAM-binding methyltransferase superfamily. MenG/UbiE family.

It carries out the reaction a 2-demethylmenaquinol + S-adenosyl-L-methionine = a menaquinol + S-adenosyl-L-homocysteine + H(+). It catalyses the reaction a 2-methoxy-6-(all-trans-polyprenyl)benzene-1,4-diol + S-adenosyl-L-methionine = a 5-methoxy-2-methyl-3-(all-trans-polyprenyl)benzene-1,4-diol + S-adenosyl-L-homocysteine + H(+). It participates in quinol/quinone metabolism; menaquinone biosynthesis; menaquinol from 1,4-dihydroxy-2-naphthoate: step 2/2. Its pathway is cofactor biosynthesis; ubiquinone biosynthesis. Methyltransferase required for the conversion of demethylmenaquinol (DMKH2) to menaquinol (MKH2) and the conversion of 2-polyprenyl-6-methoxy-1,4-benzoquinol (DDMQH2) to 2-polyprenyl-3-methyl-6-methoxy-1,4-benzoquinol (DMQH2). The chain is Ubiquinone/menaquinone biosynthesis C-methyltransferase UbiE from Enterobacter sp. (strain 638).